The chain runs to 274 residues: 2,3,4,5-tetrahydropyridine-2,6-dicarboxylate N-succinyltransferase (274 aa).

Substrate contacts are provided by Arg104 and Asp141.

The protein belongs to the transferase hexapeptide repeat family. In terms of assembly, homotrimer.

The protein localises to the cytoplasm. The enzyme catalyses (S)-2,3,4,5-tetrahydrodipicolinate + succinyl-CoA + H2O = (S)-2-succinylamino-6-oxoheptanedioate + CoA. Its pathway is amino-acid biosynthesis; L-lysine biosynthesis via DAP pathway; LL-2,6-diaminopimelate from (S)-tetrahydrodipicolinate (succinylase route): step 1/3. The sequence is that of 2,3,4,5-tetrahydropyridine-2,6-dicarboxylate N-succinyltransferase from Shewanella pealeana (strain ATCC 700345 / ANG-SQ1).